A 473-amino-acid polypeptide reads, in one-letter code: Glycogen synthase (473 aa).

Residue K15 coordinates ADP-alpha-D-glucose.

It belongs to the glycosyltransferase 1 family. Bacterial/plant glycogen synthase subfamily.

It catalyses the reaction [(1-&gt;4)-alpha-D-glucosyl](n) + ADP-alpha-D-glucose = [(1-&gt;4)-alpha-D-glucosyl](n+1) + ADP + H(+). Its pathway is glycan biosynthesis; glycogen biosynthesis. In terms of biological role, synthesizes alpha-1,4-glucan chains using ADP-glucose. The chain is Glycogen synthase from Flavobacterium johnsoniae (strain ATCC 17061 / DSM 2064 / JCM 8514 / BCRC 14874 / CCUG 350202 / NBRC 14942 / NCIMB 11054 / UW101) (Cytophaga johnsonae).